Consider the following 250-residue polypeptide: 3-deoxy-manno-octulosonate cytidylyltransferase (250 aa).

It belongs to the KdsB family.

It is found in the cytoplasm. The catalysed reaction is 3-deoxy-alpha-D-manno-oct-2-ulosonate + CTP = CMP-3-deoxy-beta-D-manno-octulosonate + diphosphate. It participates in nucleotide-sugar biosynthesis; CMP-3-deoxy-D-manno-octulosonate biosynthesis; CMP-3-deoxy-D-manno-octulosonate from 3-deoxy-D-manno-octulosonate and CTP: step 1/1. Its pathway is bacterial outer membrane biogenesis; lipopolysaccharide biosynthesis. Functionally, activates KDO (a required 8-carbon sugar) for incorporation into bacterial lipopolysaccharide in Gram-negative bacteria. The protein is 3-deoxy-manno-octulosonate cytidylyltransferase of Legionella pneumophila (strain Corby).